Here is a 477-residue protein sequence, read N- to C-terminus: Bifunctional protein HldE (477 aa).

The segment at 1–318 (MKVTLPEFER…ENAVRGRADT (318 aa)) is ribokinase. Lys179 carries the post-translational modification N6-acetyllysine. 195–198 (NLSE) is an ATP binding site. Asp264 is an active-site residue. A cytidylyltransferase region spans residues 344 to 477 (MTNGVFDILH…IKKIQQDKKG (134 aa)).

It in the N-terminal section; belongs to the carbohydrate kinase PfkB family. In the C-terminal section; belongs to the cytidylyltransferase family. Homodimer.

It carries out the reaction D-glycero-beta-D-manno-heptose 7-phosphate + ATP = D-glycero-beta-D-manno-heptose 1,7-bisphosphate + ADP + H(+). The enzyme catalyses D-glycero-beta-D-manno-heptose 1-phosphate + ATP + H(+) = ADP-D-glycero-beta-D-manno-heptose + diphosphate. The protein operates within nucleotide-sugar biosynthesis; ADP-L-glycero-beta-D-manno-heptose biosynthesis; ADP-L-glycero-beta-D-manno-heptose from D-glycero-beta-D-manno-heptose 7-phosphate: step 1/4. It functions in the pathway nucleotide-sugar biosynthesis; ADP-L-glycero-beta-D-manno-heptose biosynthesis; ADP-L-glycero-beta-D-manno-heptose from D-glycero-beta-D-manno-heptose 7-phosphate: step 3/4. Its pathway is bacterial outer membrane biogenesis; LPS core biosynthesis. In terms of biological role, catalyzes the phosphorylation of D-glycero-D-manno-heptose 7-phosphate at the C-1 position to selectively form D-glycero-beta-D-manno-heptose-1,7-bisphosphate. Catalyzes the ADP transfer from ATP to D-glycero-beta-D-manno-heptose 1-phosphate, yielding ADP-D-glycero-beta-D-manno-heptose. This is Bifunctional protein HldE from Shigella flexneri.